A 417-amino-acid polypeptide reads, in one-letter code: Gamma-glutamyl phosphate reductase (417 aa).

Belongs to the gamma-glutamyl phosphate reductase family.

The protein resides in the cytoplasm. The enzyme catalyses L-glutamate 5-semialdehyde + phosphate + NADP(+) = L-glutamyl 5-phosphate + NADPH + H(+). The protein operates within amino-acid biosynthesis; L-proline biosynthesis; L-glutamate 5-semialdehyde from L-glutamate: step 2/2. In terms of biological role, catalyzes the NADPH-dependent reduction of L-glutamate 5-phosphate into L-glutamate 5-semialdehyde and phosphate. The product spontaneously undergoes cyclization to form 1-pyrroline-5-carboxylate. This Bacteroides thetaiotaomicron (strain ATCC 29148 / DSM 2079 / JCM 5827 / CCUG 10774 / NCTC 10582 / VPI-5482 / E50) protein is Gamma-glutamyl phosphate reductase.